The primary structure comprises 543 residues: Chaperonin GroEL 1 (543 aa).

ATP contacts are provided by residues 30–33, K51, 87–91, G415, and D496; these read TLGP and DGTTT.

It belongs to the chaperonin (HSP60) family. As to quaternary structure, forms a cylinder of 14 subunits composed of two heptameric rings stacked back-to-back. Interacts with the co-chaperonin GroES.

It localises to the cytoplasm. It catalyses the reaction ATP + H2O + a folded polypeptide = ADP + phosphate + an unfolded polypeptide.. In terms of biological role, together with its co-chaperonin GroES, plays an essential role in assisting protein folding. The GroEL-GroES system forms a nano-cage that allows encapsulation of the non-native substrate proteins and provides a physical environment optimized to promote and accelerate protein folding. This Roseobacter denitrificans (strain ATCC 33942 / OCh 114) (Erythrobacter sp. (strain OCh 114)) protein is Chaperonin GroEL 1.